The sequence spans 762 residues: 5-methyltetrahydropteroyltriglutamate--homocysteine methyltransferase (762 aa).

5-methyltetrahydropteroyltri-L-glutamate is bound by residues 17-20 and lysine 111; that span reads REWK. Residues 435–437 and glutamate 488 contribute to the L-homocysteine site; that span reads IGS. Residues 435–437 and glutamate 488 contribute to the L-methionine site; that span reads IGS. Residues 519–520 and tryptophan 565 each bind 5-methyltetrahydropteroyltri-L-glutamate; that span reads RC. Aspartate 603 provides a ligand contact to L-homocysteine. Aspartate 603 is an L-methionine binding site. Glutamate 609 is a binding site for 5-methyltetrahydropteroyltri-L-glutamate. Zn(2+)-binding residues include histidine 645, cysteine 647, and glutamate 669. The Proton donor role is filled by histidine 698. Residue cysteine 730 participates in Zn(2+) binding.

The protein belongs to the vitamin-B12 independent methionine synthase family. It depends on Zn(2+) as a cofactor.

The catalysed reaction is 5-methyltetrahydropteroyltri-L-glutamate + L-homocysteine = tetrahydropteroyltri-L-glutamate + L-methionine. It participates in amino-acid biosynthesis; L-methionine biosynthesis via de novo pathway; L-methionine from L-homocysteine (MetE route): step 1/1. Catalyzes the transfer of a methyl group from 5-methyltetrahydrofolate to homocysteine resulting in methionine formation. The protein is 5-methyltetrahydropteroyltriglutamate--homocysteine methyltransferase of Bacillus anthracis (strain CDC 684 / NRRL 3495).